The sequence spans 196 residues: MANIVFIDNFDSFTYNLVDQFRSLGHSVKIYRNHIPAETIEQAINELENPVVLLSPGPGAPSEAGSMPELIQRMKGKVPMIGICLGHQAIVEAYGGTVAGAGEIIHGKVSMMEHQDHAIYQNLPSPLAIARYHSLVATKVPDSLTITAEVDNLVMSVVHEQDKVCGFQFHPESIMTTYGATLLGNAIEWALEKNNA.

Positions 3–196 constitute a Glutamine amidotransferase type-1 domain; sequence NIVFIDNFDS…IEWALEKNNA (194 aa). 57-59 contacts L-glutamine; it reads GPG. Cys84 functions as the Nucleophile; for GATase activity in the catalytic mechanism. Residues Gln88 and 134 to 135 each bind L-glutamine; that span reads SL. Residues His170 and Glu172 each act as for GATase activity in the active site.

In terms of assembly, heterotetramer consisting of two non-identical subunits: a beta subunit (TrpG) and a large alpha subunit (TrpE).

The enzyme catalyses chorismate + L-glutamine = anthranilate + pyruvate + L-glutamate + H(+). It participates in amino-acid biosynthesis; L-tryptophan biosynthesis; L-tryptophan from chorismate: step 1/5. Its function is as follows. Part of a heterotetrameric complex that catalyzes the two-step biosynthesis of anthranilate, an intermediate in the biosynthesis of L-tryptophan. In the first step, the glutamine-binding beta subunit (TrpG) of anthranilate synthase (AS) provides the glutamine amidotransferase activity which generates ammonia as a substrate that, along with chorismate, is used in the second step, catalyzed by the large alpha subunit of AS (TrpE) to produce anthranilate. In the absence of TrpG, TrpE can synthesize anthranilate directly from chorismate and high concentrations of ammonia. The polypeptide is Anthranilate synthase component 2 (trpG) (Vibrio parahaemolyticus serotype O3:K6 (strain RIMD 2210633)).